The sequence spans 358 residues: 3-dehydroquinate synthase (358 aa).

NAD(+) is bound by residues 70 to 75 (DGEAHK), 104 to 108 (GVIGD), 128 to 129 (TT), Lys-141, and Lys-150. Positions 183, 246, and 263 each coordinate Zn(2+).

Belongs to the sugar phosphate cyclases superfamily. Dehydroquinate synthase family. It depends on NAD(+) as a cofactor. The cofactor is Co(2+). Zn(2+) serves as cofactor.

The protein localises to the cytoplasm. The catalysed reaction is 7-phospho-2-dehydro-3-deoxy-D-arabino-heptonate = 3-dehydroquinate + phosphate. Its pathway is metabolic intermediate biosynthesis; chorismate biosynthesis; chorismate from D-erythrose 4-phosphate and phosphoenolpyruvate: step 2/7. Catalyzes the conversion of 3-deoxy-D-arabino-heptulosonate 7-phosphate (DAHP) to dehydroquinate (DHQ). This is 3-dehydroquinate synthase from Bordetella bronchiseptica (strain ATCC BAA-588 / NCTC 13252 / RB50) (Alcaligenes bronchisepticus).